The sequence spans 310 residues: Proline dehydrogenase (310 aa).

Position 98 (lysine 98) interacts with substrate. Residue aspartate 135 is part of the active site. Residues methionine 136, glutamine 166, 187-192 (RMVKGA), 229-230 (TH), and 292-295 (RIAE) each bind FAD. Residue arginine 187 is part of the active site. A substrate-binding site is contributed by 291 to 292 (RR).

It belongs to the proline dehydrogenase family. The cofactor is FAD.

The catalysed reaction is L-proline + a quinone = (S)-1-pyrroline-5-carboxylate + a quinol + H(+). It functions in the pathway amino-acid degradation; L-proline degradation into L-glutamate; L-glutamate from L-proline: step 1/2. In terms of biological role, converts proline to delta-1-pyrroline-5-carboxylate. In Deinococcus radiodurans (strain ATCC 13939 / DSM 20539 / JCM 16871 / CCUG 27074 / LMG 4051 / NBRC 15346 / NCIMB 9279 / VKM B-1422 / R1), this protein is Proline dehydrogenase.